The primary structure comprises 204 residues: Translation initiation factor 2 subunit beta (204 aa).

The TRAM domain maps to 146-204 (NLEEGQVLDVEIQSLSKRGDGVVKMGRYIMYVSNAKPGQSVKIKISRISGSIVFTERAE).

Belongs to the eIF-2-beta/eIF-5 family. In terms of assembly, heterotrimer composed of an alpha, a beta and a gamma chain.

EIF-2 functions in the early steps of protein synthesis by forming a ternary complex with GTP and initiator tRNA. The polypeptide is Translation initiation factor 2 subunit beta (Methanoregula boonei (strain DSM 21154 / JCM 14090 / 6A8)).